We begin with the raw amino-acid sequence, 222 residues long: Deoxyribose-phosphate aldolase (222 aa).

Aspartate 89 functions as the Proton donor/acceptor in the catalytic mechanism. Lysine 151 (schiff-base intermediate with acetaldehyde) is an active-site residue. Lysine 180 (proton donor/acceptor) is an active-site residue.

It belongs to the DeoC/FbaB aldolase family. DeoC type 1 subfamily.

Its subcellular location is the cytoplasm. The catalysed reaction is 2-deoxy-D-ribose 5-phosphate = D-glyceraldehyde 3-phosphate + acetaldehyde. It functions in the pathway carbohydrate degradation; 2-deoxy-D-ribose 1-phosphate degradation; D-glyceraldehyde 3-phosphate and acetaldehyde from 2-deoxy-alpha-D-ribose 1-phosphate: step 2/2. In terms of biological role, catalyzes a reversible aldol reaction between acetaldehyde and D-glyceraldehyde 3-phosphate to generate 2-deoxy-D-ribose 5-phosphate. This Acholeplasma laidlawii (strain PG-8A) protein is Deoxyribose-phosphate aldolase.